The sequence spans 462 residues: Nitrate/nitrite transporter NarU (462 aa).

The Cytoplasmic segment spans residues M1–N35. The chain crosses the membrane as a helical span at residues L36–V56. Topologically, residues T57–T76 are periplasmic. A helical membrane pass occupies residues A77–F97. Topologically, residues G98–R101 are cytoplasmic. The chain crosses the membrane as a helical span at residues W102 to Q122. Residues N123–N125 are Periplasmic-facing. A helical transmembrane segment spans residues T126–A146. Residues S147–Q180 are Cytoplasmic-facing. Residues L181–P201 traverse the membrane as a helical segment. Residues Q202–S206 lie on the Periplasmic side of the membrane. The chain crosses the membrane as a helical span at residues V207–A227. Topologically, residues A228–S258 are cytoplasmic. The helical transmembrane segment at L259–A279 threads the bilayer. Topologically, residues K280–N287 are periplasmic. A helical transmembrane segment spans residues I288–A308. Over I309 to R317 the chain is Cytoplasmic. A helical transmembrane segment spans residues V318–P338. The Periplasmic portion of the chain corresponds to G339–N344. A helical transmembrane segment spans residues F345–S365. Residues T366–A401 are Cytoplasmic-facing. The helical transmembrane segment at A402–F422 threads the bilayer. At G423–P432 the chain is on the periplasmic side. Residues V433 to V453 traverse the membrane as a helical segment. The Cytoplasmic portion of the chain corresponds to Y454–K462.

The protein belongs to the major facilitator superfamily. Nitrate/nitrite porter (TC 2.A.1.8) family.

It localises to the cell inner membrane. In terms of biological role, catalyzes nitrate uptake, nitrite uptake and nitrite export across the cytoplasmic membrane. May function as a nitrate/H(+) and nitrite/H(+) channel. Could confer a selective advantage during severe nutrient starvation or slow growth. The protein is Nitrate/nitrite transporter NarU (narU) of Escherichia coli (strain K12).